The sequence spans 1194 residues: Multidrug efflux ATP-binding/permease protein Rv0194 (1194 aa).

Helical transmembrane passes span Leu-20–Val-40, Leu-56–Val-76, Leu-130–Val-150, Trp-153–Ala-173, Phe-258–Phe-278, and Trp-279–Ala-299. One can recognise an ABC transmembrane type-1 1 domain in the interval Leu-21 to Gln-301. In terms of domain architecture, ABC transporter 1 spans Leu-334 to Pro-568. An ATP-binding site is contributed by Gly-367–Ser-374. 6 helical membrane passes run Ala-628–Ile-648, Val-660–Val-680, Leu-743–Ile-763, Ala-765–Phe-785, Leu-847–Leu-867, and Val-878–Ile-898. One can recognise an ABC transmembrane type-1 2 domain in the interval Ala-628–Arg-910. An ABC transporter 2 domain is found at Val-942–Ala-1177. An ATP-binding site is contributed by Gly-976–Ser-983.

Belongs to the ABC transporter superfamily. Lipid exporter (TC 3.A.1.106) family.

Its subcellular location is the cell inner membrane. With respect to regulation, efflux is inhibited by reserpine. In terms of biological role, overexpression in M.smegmatis increases resistance to erythromycin, ampicillin, novobiocin and vancomycin. It also reduces accumulation of ethidium bromide in the cell. The polypeptide is Multidrug efflux ATP-binding/permease protein Rv0194 (Mycobacterium tuberculosis (strain ATCC 25618 / H37Rv)).